The following is a 467-amino-acid chain: MEPGTNSFRVEFPDFSSTILQKLNQQRQQGQLCDVSIVVQGHIFRAHKAVLAASSPYFCDQVLLKNSRRIVLPDVMNPRVFENILLSSYTGRLVMPAPEIVSYLTAASFLQMWHVVDKCTEVLEGNPTVLCQKLNHGSDHQSPSSSSYNGLVESFELGSGGHTDFPKAQELRDGENEEESTKDELSSQLTEHEYLPSNSSTEHDRLSTEMASQDGEEGASDSAEFHYTRPMYSKPSIMAHKRWIHVKPERLEQACEGMDVHATYDEHQVTESINTVQTEHTVQPSGVEEDFHIGEKKVEAEFDEQADESNYDEQVDFYGSSMEEFSGERSDGNLIGHRQEAALAAGYSENIEMVTGIKEEASHLGFSATDKLYPCQCGKSFTHKSQRDRHMSMHLGLRPYGCGVCGKKFKMKHHLVGHMKIHTGIKPYECNICAKRFMWRDSFHRHVTSCTKSYEAAKAEQNTTEAN.

Met-1 bears the N-acetylmethionine mark. Residues 33 to 97 (CDVSIVVQGH…SYTGRLVMPA (65 aa)) form the BTB domain. Disordered stretches follow at residues 134-153 (LNHG…GLVE) and 162-225 (HTDF…SAEF). Composition is skewed to basic and acidic residues over residues 164–174 (DFPKAQELRDG) and 182–194 (KDEL…EHEY). Glycyl lysine isopeptide (Lys-Gly) (interchain with G-Cter in SUMO2) cross-links involve residues Lys-182, Lys-241, Lys-247, Lys-297, and Lys-358. The C2H2-type 1; atypical zinc finger occupies 373-394 (YPCQCGKSFTHKSQRDRHMSMH). The C2H2-type 2 zinc finger occupies 400–422 (YGCGVCGKKFKMKHHLVGHMKIH). The residue at position 423 (Thr-423) is a Phosphothreonine. Residues 428–450 (YECNICAKRFMWRDSFHRHVTSC) form a C2H2-type 3; atypical zinc finger. Lys-458 is covalently cross-linked (Glycyl lysine isopeptide (Lys-Gly) (interchain with G-Cter in SUMO2)).

This sequence belongs to the krueppel C2H2-type zinc-finger protein family. In terms of assembly, interacts with BDP1.

The protein resides in the nucleus. Functionally, may be involved in transcriptional regulation. In Homo sapiens (Human), this protein is Zinc finger and BTB domain-containing protein 43 (ZBTB43).